The following is a 739-amino-acid chain: Phosphoribosylformylglycinamidine synthase subunit PurL (739 aa).

The active site involves His-54. ATP-binding residues include Tyr-57 and Lys-96. Position 98 (Glu-98) interacts with Mg(2+). Residues 99 to 102 and Arg-121 contribute to the substrate site; that span reads SHNH. His-100 serves as the catalytic Proton acceptor. Residue Asp-122 coordinates Mg(2+). Residue Gln-245 coordinates substrate. Mg(2+) is bound at residue Asp-273. 317–319 provides a ligand contact to substrate; that stretch reads ESQ. 2 residues coordinate ATP: Asp-500 and Gly-537. Mg(2+) is bound at residue Asn-538. Substrate is bound at residue Ser-540.

This sequence belongs to the FGAMS family. In terms of assembly, monomer. Part of the FGAM synthase complex composed of 1 PurL, 1 PurQ and 2 PurS subunits.

The protein resides in the cytoplasm. The catalysed reaction is N(2)-formyl-N(1)-(5-phospho-beta-D-ribosyl)glycinamide + L-glutamine + ATP + H2O = 2-formamido-N(1)-(5-O-phospho-beta-D-ribosyl)acetamidine + L-glutamate + ADP + phosphate + H(+). The protein operates within purine metabolism; IMP biosynthesis via de novo pathway; 5-amino-1-(5-phospho-D-ribosyl)imidazole from N(2)-formyl-N(1)-(5-phospho-D-ribosyl)glycinamide: step 1/2. Its function is as follows. Part of the phosphoribosylformylglycinamidine synthase complex involved in the purines biosynthetic pathway. Catalyzes the ATP-dependent conversion of formylglycinamide ribonucleotide (FGAR) and glutamine to yield formylglycinamidine ribonucleotide (FGAM) and glutamate. The FGAM synthase complex is composed of three subunits. PurQ produces an ammonia molecule by converting glutamine to glutamate. PurL transfers the ammonia molecule to FGAR to form FGAM in an ATP-dependent manner. PurS interacts with PurQ and PurL and is thought to assist in the transfer of the ammonia molecule from PurQ to PurL. This chain is Phosphoribosylformylglycinamidine synthase subunit PurL, found in Bacillus cereus (strain ZK / E33L).